A 562-amino-acid polypeptide reads, in one-letter code: Protein FAM222B (562 aa).

2 stretches are compositionally biased toward low complexity: residues 155–167 (QQAL…LAHA) and 183–201 (ALSH…HPQP). 3 disordered regions span residues 155–203 (QQAL…QPMA), 219–245 (LQHP…VTVS), and 537–562 (AHRA…PGYR).

The protein belongs to the FAM222 family.

The chain is Protein FAM222B (FAM222B) from Homo sapiens (Human).